The sequence spans 341 residues: Thromboxane A2 receptor (341 aa).

Residues 1–29 (MWLNSTSLGACFRPVNITLQERRAIASPW) lie on the Extracellular side of the membrane. N-linked (GlcNAc...) asparagine glycosylation is found at Asn-4 and Asn-16. Residues 30–52 (FAASFCALGLGSNLLALSVLAGA) form a helical membrane-spanning segment. Residues 53–65 (RPGAGPRSSFLAL) are Cytoplasmic-facing. The helical transmembrane segment at 66–86 (LCGLVLTDFLGLLVTGAVVAS) threads the bilayer. At 87–105 (QHAALLDWRATDPGCRLCH) the chain is on the extracellular side. Cys-104 and Cys-181 are oxidised to a cystine. The helical transmembrane segment at 106–127 (FMGAAMVFFGLCPLLLGAAMAA) threads the bilayer. Over 128 to 147 (ERFVGITRPFSRPAATSRRA) the chain is Cytoplasmic. The helical transmembrane segment at 148–170 (WATVGLVWVGAGTLGLLPLLGLG) threads the bilayer. At 171 to 191 (RYSVQYPGSWCFLTLGAERGD) the chain is on the extracellular side. A helical transmembrane segment spans residues 192–217 (VAFGLMFALLGSVSVGLSLLLNTVSV). Over 218–244 (ATLCRVYHAREATQRPRDCEVEMMVQL) the chain is Cytoplasmic. Residues 245 to 268 (VGIMVVATVCWMPLLVFILQTLLQ) form a helical membrane-spanning segment. Residues 269–287 (TLPVMSPSGQLLRTTERQL) lie on the Extracellular side of the membrane. A helical membrane pass occupies residues 288-309 (LIYLRVATWNQILDPWVYILFR). Residues 310–341 (RSVLRRLHPRFTSQLQAVSLHSPPTQAMLSGP) lie on the Cytoplasmic side of the membrane. The residue at position 328 (Ser-328) is a Phosphoserine.

Belongs to the G-protein coupled receptor 1 family. Interacts with RPGRIP1L. Interacts with RACK1; the interaction regulates TBXA2R cell surface expression. In the brain, expressed in all types of glial cells. In the kidney, expressed in the mesangial cells of the glomerulus, smooth muscle cells of the renal arterioles, and in transitional cell epithelium of renal pelvis.

Its subcellular location is the cell membrane. Receptor for thromboxane A2 (TXA2), a potent stimulator of platelet aggregation. The activity of this receptor is mediated by a G-protein that activates a phosphatidylinositol-calcium second messenger system. In the kidney, the binding of TXA2 to glomerular TP receptors causes intense vasoconstriction. Activates phospholipase C and adenylyl cyclase. This is Thromboxane A2 receptor (Tbxa2r) from Rattus norvegicus (Rat).